Reading from the N-terminus, the 518-residue chain is MFS-type transporter cnsO (518 aa).

The span at 1–13 shows a compositional bias: polar residues; that stretch reads MESTDSSPPLSMT. Residues 1–24 form a disordered region; the sequence is MESTDSSPPLSMTDTEKKGDAVTT. 9 helical membrane-spanning segments follow: residues 99-119, 122-142, 156-176, 187-207, 221-241, 298-318, 334-354, 362-382, and 392-412; these read LALM…NIML, VGPK…TTLT, LMLG…LSMW, AIFY…AYGV, WLFL…LFCL, FMMM…SYTL, VMTT…GYIS, LCIM…WITV, and YFAI…VGAW. Asn-416 is a glycosylation site (N-linked (GlcNAc...) asparagine). Helical transmembrane passes span 427–447 and 455–475; these read IGLL…NIYI and PLGF…PATI.

This sequence belongs to the major facilitator superfamily.

The protein localises to the cell membrane. MFS-type transporter; part of the gene cluster that mediates the biosynthesis of communesins, a prominent class of indole alkaloids with great potential as pharmaceuticals. With the MFS transporter cnsL, is most likely responsible for cummunesins secretion and thereby may contribute to intrinsic resistance. This Penicillium expansum (Blue mold rot fungus) protein is MFS-type transporter cnsO.